The following is a 674-amino-acid chain: Probable protein phosphatase 2C 66 (674 aa).

A Phosphoserine modification is found at S125. 2 disordered regions span residues 153 to 175 (YSGP…RKKP) and 202 to 247 (KSVI…KQSM). Positions 244-665 (KQSMNSVLDV…DDVSVIVISL (422 aa)) constitute a PPM-type phosphatase domain. Residues D282 and G283 each contribute to the Mn(2+) site. Residues 373-384 (NNKTKSDNRCDQ) show a composition bias toward basic and acidic residues. The disordered stretch occupies residues 373–392 (NNKTKSDNRCDQKGSNSTTT). Positions 593 and 656 each coordinate Mn(2+).

The protein belongs to the PP2C family. Mg(2+) serves as cofactor. Mn(2+) is required as a cofactor. As to expression, expressed at low level in seedlings, roots, leaves, stems, young inflorescences, flowers and siliques.

The protein resides in the nucleus. It carries out the reaction O-phospho-L-seryl-[protein] + H2O = L-seryl-[protein] + phosphate. It catalyses the reaction O-phospho-L-threonyl-[protein] + H2O = L-threonyl-[protein] + phosphate. In Arabidopsis thaliana (Mouse-ear cress), this protein is Probable protein phosphatase 2C 66 (PLL2).